Consider the following 352-residue polypeptide: Molybdenum import ATP-binding protein ModC (352 aa).

The ABC transporter domain occupies 1–229; that stretch reads MLELNFSQTL…SVMNPWLPKE (229 aa). 31-38 provides a ligand contact to ATP; that stretch reads GVSGAGKT. The Mop domain maps to 289 to 352; it reads QTSIRNVLRA…AQIKSVSITA (64 aa).

This sequence belongs to the ABC transporter superfamily. Molybdate importer (TC 3.A.1.8) family. In terms of assembly, the complex is composed of two ATP-binding proteins (ModC), two transmembrane proteins (ModB) and a solute-binding protein (ModA).

The protein localises to the cell inner membrane. The catalysed reaction is molybdate(out) + ATP + H2O = molybdate(in) + ADP + phosphate + H(+). Functionally, part of the ABC transporter complex ModABC involved in molybdenum import. Responsible for energy coupling to the transport system. This is Molybdenum import ATP-binding protein ModC from Escherichia coli (strain K12).